An 808-amino-acid polypeptide reads, in one-letter code: MAKTLLHGTLHVTIFEVDHLKAGSVVVFSESLRRTLRKPLVLAKGTPKIYASIDLDKARVGRTRMIENEPNNPKWNESFHIYCGHPSTNVIFTVKDDNPIGATLIGRAYLPVHELLEGEEVDKWVEILDEDKNPISEGSKIHVKLQYFDITQDRNWAHGIRSSKFPGVPYTFFSQRPGCRISLYQDAHVPDNFVPKIPLSGGKFYEPHRCWEDVFDAITNAKHFIYITGWSVYTEFALIRDTRRPKPGGDIMLGELLKKKADEGVRVLMLVWDDRTSVGLLKKDGLMATHDQETEEYFRDSNVHCVLCLRNPDDGGGIIQGLTISTIFTHHQKIVVVDSEMPTSGSENRRVVSFVGGIDLCDGRYDTPFHSLFRTLDTAHHDDFHQPNFEGAAITKGGPREPWHDIHSRLEGPVAWDVLFNFEQRWRKQGGKDILLNLRELQDVIIPPSPVTFPDDDETWNVQLFRSIDEGAAFFFPQTPEEAAKAGLVSGKENIIVRSIQDAYIHAIRGPKISFILKISIFLEALLAGIQRILKMRTSVLCILIPKELSLKIVSKIEAGKRFTVYVVLPMWPEGIPESGSVQAILDWQRRTMEMMYKDIIQALQANGIEEDPRNYLTFFCLGNREVKRDGEYEPSEKPDPDTDYSRAQESRRFMIYVHAKMMIVDDEYIIIGSANINQRSMDGAKDSEIAMGAYQPHHLATREPARGQIHGFRMSLWYEHLGMLDDTLALPESVDCVQKVNTVADKYWDLYSSETLENDLPGHLLRYPIAVASEGNVTELPGTEFFPDTKARVLGAKSDFLPPILTT.

The C2 domain occupies 1-125 (MAKTLLHGTL…LEGEEVDKWV (125 aa)). Residue Asp-186 participates in Ca(2+) binding. One can recognise a PLD phosphodiesterase 1 domain in the interval 326–364 (TIFTHHQKIVVVDSEMPTSGSENRRVVSFVGGIDLCDGR). Active-site residues include His-331, Lys-333, and Asp-338. An a 1,2-diacyl-sn-glycero-3-phosphate-binding site is contributed by His-331. Ca(2+)-binding residues include His-370 and His-404. The region spanning 654–681 (FMIYVHAKMMIVDDEYIIIGSANINQRS) is the PLD phosphodiesterase 2 domain. Active-site residues include His-659, Lys-661, and Asp-666. His-659 contacts a 1,2-diacyl-sn-glycero-3-phosphate. Position 720 (Glu-720) interacts with Ca(2+).

This sequence belongs to the phospholipase D family. C2-PLD subfamily. Ca(2+) is required as a cofactor.

The catalysed reaction is a 1,2-diacyl-sn-glycero-3-phosphocholine + H2O = a 1,2-diacyl-sn-glycero-3-phosphate + choline + H(+). In terms of biological role, hydrolyzes glycerol-phospholipids at the terminal phosphodiesteric bond. Plays an important role in various cellular processes. The chain is Phospholipase D alpha 1 (PLD1) from Spuriopimpinella brachycarpa (Chamnamul).